Here is a 449-residue protein sequence, read N- to C-terminus: Phosphoglucosamine mutase (449 aa).

Ser104 serves as the catalytic Phosphoserine intermediate. Mg(2+) is bound by residues Ser104, Asp243, Asp245, and Asp247. Ser104 carries the post-translational modification Phosphoserine.

Belongs to the phosphohexose mutase family. Mg(2+) is required as a cofactor. In terms of processing, activated by phosphorylation.

The catalysed reaction is alpha-D-glucosamine 1-phosphate = D-glucosamine 6-phosphate. Functionally, catalyzes the conversion of glucosamine-6-phosphate to glucosamine-1-phosphate. The sequence is that of Phosphoglucosamine mutase from Xanthomonas campestris pv. campestris (strain 8004).